Here is a 164-residue protein sequence, read N- to C-terminus: uncharacterized protein (164 aa).

This is an uncharacterized protein from Rickettsia bellii (strain RML369-C).